Here is a 447-residue protein sequence, read N- to C-terminus: Probable glycine dehydrogenase (decarboxylating) subunit 1 (447 aa).

Belongs to the GcvP family. N-terminal subunit subfamily. As to quaternary structure, the glycine cleavage system is composed of four proteins: P, T, L and H. In this organism, the P 'protein' is a heterodimer of two subunits.

The enzyme catalyses N(6)-[(R)-lipoyl]-L-lysyl-[glycine-cleavage complex H protein] + glycine + H(+) = N(6)-[(R)-S(8)-aminomethyldihydrolipoyl]-L-lysyl-[glycine-cleavage complex H protein] + CO2. Functionally, the glycine cleavage system catalyzes the degradation of glycine. The P protein binds the alpha-amino group of glycine through its pyridoxal phosphate cofactor; CO(2) is released and the remaining methylamine moiety is then transferred to the lipoamide cofactor of the H protein. This is Probable glycine dehydrogenase (decarboxylating) subunit 1 from Bacillus mycoides (strain KBAB4) (Bacillus weihenstephanensis).